A 65-amino-acid polypeptide reads, in one-letter code: MPKMKTKSSAKKRFKVTGSGKIKRKHAFKSHILTKKSKKRKLALTHSALVHATDMKSIKQQLRII.

Residues 1–22 form a disordered region; sequence MPKMKTKSSAKKRFKVTGSGKI.

This sequence belongs to the bacterial ribosomal protein bL35 family.

The chain is Large ribosomal subunit protein bL35 from Flavobacterium psychrophilum (strain ATCC 49511 / DSM 21280 / CIP 103535 / JIP02/86).